The primary structure comprises 92 residues: Small ribosomal subunit protein bS20 (92 aa).

The interval 1–24 (MANTTSAKKATRKIARRTDVNKAR) is disordered.

This sequence belongs to the bacterial ribosomal protein bS20 family.

In terms of biological role, binds directly to 16S ribosomal RNA. The chain is Small ribosomal subunit protein bS20 from Rhizobium etli (strain ATCC 51251 / DSM 11541 / JCM 21823 / NBRC 15573 / CFN 42).